The following is a 37-amino-acid chain: Large ribosomal subunit protein bL36c (37 aa).

The protein belongs to the bacterial ribosomal protein bL36 family.

Its subcellular location is the plastid. The protein localises to the chloroplast. This is Large ribosomal subunit protein bL36c from Tetradesmus obliquus (Green alga).